Here is a 182-residue protein sequence, read N- to C-terminus: Lipoprotein signal peptidase (182 aa).

Helical transmembrane passes span 12 to 32, 68 to 88, and 91 to 111; these read VAVFACVAAAALIVDQLTKAW, ATWVISLLAVVACVALAVAGV, and ISMKWSVALSFAFAGALGNLI. Residues Asp-127 and Asp-140 contribute to the active site. A helical transmembrane segment spans residues 135–155; that stretch reads VGNVADIYLVVAGVVLVILIL.

Belongs to the peptidase A8 family.

The protein resides in the cell membrane. The catalysed reaction is Release of signal peptides from bacterial membrane prolipoproteins. Hydrolyzes -Xaa-Yaa-Zaa-|-(S,diacylglyceryl)Cys-, in which Xaa is hydrophobic (preferably Leu), and Yaa (Ala or Ser) and Zaa (Gly or Ala) have small, neutral side chains.. It functions in the pathway protein modification; lipoprotein biosynthesis (signal peptide cleavage). Functionally, this protein specifically catalyzes the removal of signal peptides from prolipoproteins. The sequence is that of Lipoprotein signal peptidase from Bifidobacterium longum subsp. infantis (strain ATCC 15697 / DSM 20088 / JCM 1222 / NCTC 11817 / S12).